Here is a 147-residue protein sequence, read N- to C-terminus: MSQNLTEEQIAEFKEAFALFDKDNSGSISASELATVMRSLGLSPSEAEVADLMNEIDVDGNHAIEFSEFLALMSRQLKCNDSEQELLEAFKVFDKNGDGLISAAELKHVLTSIGEKLTDAEVDEMLREVSDGSGEINIKQFAALLSK.

EF-hand domains are found at residues 8–43, 44–79, 81–116, and 120–147; these read EQIAEFKEAFALFDKDNSGSISASELATVMRSLGLS, PSEAEVADLMNEIDVDGNHAIEFSEFLALMSRQLKC, DSEQELLEAFKVFDKNGDGLISAAELKHVLTSIGEK, and AEVDEMLREVSDGSGEINIKQFAALLSK. The Ca(2+) site is built by aspartate 21, aspartate 23, serine 25, serine 27, glutamate 32, aspartate 57, aspartate 59, asparagine 61, glutamate 68, aspartate 94, asparagine 96, aspartate 98, and glutamate 105.

This sequence belongs to the calmodulin family.

Its function is as follows. Calmodulin mediates the control of a large number of enzymes, ion channels and other proteins by Ca(2+). Among the enzymes to be stimulated by the calmodulin-Ca(2+) complex are a number of protein kinases and phosphatases. The protein is Calmodulin (CMD1) of Kluyveromyces lactis (strain ATCC 8585 / CBS 2359 / DSM 70799 / NBRC 1267 / NRRL Y-1140 / WM37) (Yeast).